Reading from the N-terminus, the 123-residue chain is SPbeta prophage-derived uncharacterized protein YorE (123 aa).

In Bacillus subtilis (strain 168), this protein is SPbeta prophage-derived uncharacterized protein YorE (yorE).